The chain runs to 1214 residues: Protein charlatan (1214 aa).

3 disordered regions span residues 1–20 (MATL…QSSN), 213–238 (HVNQ…RQEH), and 250–284 (SANA…GGRK). Residues 258–276 (AQSTPTSAPSNSSGGSTSS) show a composition bias toward low complexity. 2 C2H2-type zinc fingers span residues 305–327 (YACT…ENIH) and 333–356 (FQCY…LRMH). Disordered regions lie at residues 367-397 (RRHV…NVTI) and 463-488 (PVAS…SGLL). Residues 473-485 (GSHGGNGNGGSGS) are compositionally biased toward gly residues. 2 consecutive C2H2-type zinc fingers follow at residues 496-518 (FTCC…LNTH) and 522-545 (FVCL…LKVH). Disordered stretches follow at residues 741-790 (SASS…ATSP), 848-946 (NDED…SGPS), and 1062-1084 (LSTP…SNAS). 4 stretches are compositionally biased toward low complexity: residues 855-871 (QQHQ…QQQQ), 885-896 (NNNNNNNSNNNN), 923-946 (SPGT…SGPS), and 1071-1084 (KAAP…SNAS).

Expressed in the PNS and CNS. In early blastoderm stages, it is ubiquitously expressed, then, before stage 5, it disappears from the poles of the embryo and faint stripes are visible. At stage 5, it also accumulates in the dorsal region, cephalic furrow ectodermal patches between the tracheal pits, where neurons of the PNS appear. In older embryos (stage 15) a strong expression is mostly restricted to the central nervous system (CNS) and PNS. In PNS, the pattern suggests that expression occur in many of the neurons of the ventral, lateral and dorsal clusters of neurons. In third instar wing disks, it is expressed in rows of cells on either side of the prospective anterior wing margin and in groups of cells that coincide with proneural clusters of ac/sc expression. Also expressed independently of ac/sc in certain areas of the disk, such as the postnotum and posterior dorsal proximal wing. Expressed in the proneural clusters of the leg disks and in the eye/antenna disk.

It localises to the nucleus. Its function is as follows. Probable transcription factor involved in the development of the adult pattern of macrochaetae. Required for accumulation of achaete (ac) and scute (sc) in proneural clusters. Probably acts by binding to the proneural cluster-specific enhancers of the ac/sc complex and increasing enhancer efficiency, thereby acting as a stimulator of ac/sc expression in proneural clusters. Also required for correct development of the embryonic/larval peripheral nervous system (PNS). This is Protein charlatan (chn) from Drosophila melanogaster (Fruit fly).